A 146-amino-acid polypeptide reads, in one-letter code: Cyanate hydratase (146 aa).

Residues Arg-87, Glu-90, and Ser-113 contribute to the active site.

Belongs to the cyanase family.

It catalyses the reaction cyanate + hydrogencarbonate + 3 H(+) = NH4(+) + 2 CO2. In terms of biological role, catalyzes the reaction of cyanate with bicarbonate to produce ammonia and carbon dioxide. This Nostoc sp. (strain PCC 7120 / SAG 25.82 / UTEX 2576) protein is Cyanate hydratase.